The following is a 372-amino-acid chain: MFDFKVLSRSTNTAGRVGRLSTPHGILSTPQFMPVGTLGTVKGITATQLKDTNAQMILANTFHLHLQPGEAIIKESGGLHSFMSWDQPILTDSGGYQVFSLGKLNKIDDFGVSFKSPRDGSHIELTPEKAIQIQMDLGADVVMAFDQCPPYPASKVEVEEACKRTHLWLERCVATHSKEDQALFGIVQGGCFLDLREESARRVASFHLPGIAIGGVSVGEPSDQIHKIVRHVAPLLPNEVPRYLMGIGTIREMAVAVANGVDFFDCVLPTRLGRHGTALVRDERWNLRNACFRNDYQPLDTTCVCETCTNYNRAYLHHLIRNDELLGLTLLSLHNLSHLIRFSRAMAVAIEDDCFSEDFAPWQKSSIAHYTW.

The active-site Proton acceptor is aspartate 92. Substrate-binding positions include aspartate 92–tyrosine 96, aspartate 146, glutamine 188, and glycine 215. The interval glycine 246 to glutamate 252 is RNA binding. The Nucleophile role is filled by aspartate 265. The segment at threonine 270–arginine 274 is RNA binding; important for wobble base 34 recognition. 4 residues coordinate Zn(2+): cysteine 303, cysteine 305, cysteine 308, and histidine 334.

This sequence belongs to the queuine tRNA-ribosyltransferase family. As to quaternary structure, homodimer. Within each dimer, one monomer is responsible for RNA recognition and catalysis, while the other monomer binds to the replacement base PreQ1. Requires Zn(2+) as cofactor.

It catalyses the reaction 7-aminomethyl-7-carbaguanine + guanosine(34) in tRNA = 7-aminomethyl-7-carbaguanosine(34) in tRNA + guanine. The protein operates within tRNA modification; tRNA-queuosine biosynthesis. Functionally, catalyzes the base-exchange of a guanine (G) residue with the queuine precursor 7-aminomethyl-7-deazaguanine (PreQ1) at position 34 (anticodon wobble position) in tRNAs with GU(N) anticodons (tRNA-Asp, -Asn, -His and -Tyr). Catalysis occurs through a double-displacement mechanism. The nucleophile active site attacks the C1' of nucleotide 34 to detach the guanine base from the RNA, forming a covalent enzyme-RNA intermediate. The proton acceptor active site deprotonates the incoming PreQ1, allowing a nucleophilic attack on the C1' of the ribose to form the product. After dissociation, two additional enzymatic reactions on the tRNA convert PreQ1 to queuine (Q), resulting in the hypermodified nucleoside queuosine (7-(((4,5-cis-dihydroxy-2-cyclopenten-1-yl)amino)methyl)-7-deazaguanosine). This is Queuine tRNA-ribosyltransferase from Prochlorococcus marinus (strain SARG / CCMP1375 / SS120).